A 1452-amino-acid chain; its full sequence is Arf-GAP with Rho-GAP domain, ANK repeat and PH domain-containing protein 1 (1452 aa).

The SAM domain maps to 6 to 70 (DAALSVAEWL…LAGLHRAHAP (65 aa)). The required for interaction with SH3KBP1 stretch occupies residues 81 to 90 (PVPMKRHIFR). Disordered regions lie at residues 87-258 (HIFR…LPSR) and 271-304 (EGEE…LNPP). Pro residues-rich tracts occupy residues 92–104 (PPVP…PPPT), 154–167 (SVPP…PPYP), and 205–225 (PLQP…PPRL). 2 stretches are compositionally biased toward acidic residues: residues 228 to 239 (EFDDSDYDDVPE) and 271 to 286 (EGEE…DDDH). A Phosphoserine modification is found at serine 232. Tyrosine 234 carries the post-translational modification Phosphotyrosine; by PTK6. The 93-residue stretch at 329-421 (PVIKAGWLDK…WMQALQQAVV (93 aa)) folds into the PH 1 domain. Phosphoserine is present on serine 430. Positions 442-531 (QPDRAGSLEL…WLEAMQGAIA (90 aa)) constitute a PH 2 domain. Tyrosine 506 carries the post-translational modification Phosphotyrosine. Positions 537–662 (SEVAERIWAA…RYHPLFGNQE (126 aa)) constitute an Arf-GAP domain. A C4-type zinc finger spans residues 552-575 (CADCGAAQPDWASINLCVVICKRC). Residue serine 740 is modified to Phosphoserine. Positions 745-852 (TVSHSGFLYK…WVKCIAKAFV (108 aa)) constitute a PH 3 domain. A Rho-GAP domain is found at 956-1141 (ASLGDTLSEQ…DLINHYVVVF (186 aa)). In terms of domain architecture, Ras-associating spans 1174–1263 (GDFICTVYLE…SHLVVKKYQS (90 aa)). The PH 4 domain maps to 1276–1398 (GDTKHGMMKF…WFATFLSVQH (123 aa)). Serine 1430 and serine 1437 each carry phosphoserine.

Interacts with SH3KBP1/CIN85 (via SH3 domains). The interaction is independent of EGF and does not affect ARAP1 GTPase-activating activity but is involved in regulating ubiquitination and endocytic trafficking of EGFR. ARAP1 competes with E3 ubiquitin-protein ligase CBL for binding to SH3KBP1, preventing interaction of CBL with SH3KBP1; this is likely to regulate SH3KBP1-mediated internalization of EGFR. Interacts with TNFRSF10A. Phosphorylated by PTK6 following EGF stimulation which enhances EGFR signaling by delaying EGFR down-regulation; the interaction is mediated by the SH2 domain of PTK6. Phosphorylation promotes association with the Golgi apparatus and endosomes. Expressed in the retina where it is detected in Mueller glia (at protein level). Also detected in the retinal pigment epithelium (at protein level). Expressed in osteoclasts (at protein level).

The protein localises to the cytoplasm. It localises to the golgi apparatus. The protein resides in the trans-Golgi network. Its subcellular location is the golgi stack membrane. It is found in the cell membrane. The protein localises to the endosome. It localises to the multivesicular body. The protein resides in the cell projection. Its subcellular location is the ruffle. It is found in the podosome. The protein localises to the early endosome. Functionally, phosphatidylinositol 3,4,5-trisphosphate-dependent GTPase-activating protein that modulates actin cytoskeleton remodeling by regulating ARF and RHO family members. Activated by phosphatidylinositol 3,4,5-trisphosphate (PtdIns(3,4,5)P3) binding and, to a lesser extent, by phosphatidylinositol 3,4-bisphosphate (PtdIns(3,4)P2) binding. Has a preference for ARF1 and ARF5. Positively regulates the ring size of circular dorsal ruffles and promotes macropinocytosis. Acts as a bridging factor in osteoclasts to control actin and membrane dynamics. Regulates the condensing of osteoclast podosomes into sealing zones which segregate the bone-facing membrane from other membrane domains and are required for osteoclast resorption activity. Also regulates recruitment of the AP-3 complex to endosomal membranes and trafficking of lysosomal membrane proteins to the ruffled membrane border of osteoclasts to modulate bone resorption. Regulates the endocytic trafficking of EGFR. Regulates the incorporation of CD63 and CD9 into multivesicular bodies. Required in the retinal pigment epithelium (RPE) for photoreceptor survival due to its role in promoting RPE phagocytosis. The chain is Arf-GAP with Rho-GAP domain, ANK repeat and PH domain-containing protein 1 from Mus musculus (Mouse).